Reading from the N-terminus, the 146-residue chain is Stress enhanced protein 1, chloroplastic (146 aa).

A chloroplast-targeting transit peptide spans 1-73 (MALSQVSASL…GNRAASVSIR (73 aa)). 2 consecutive transmembrane segments (helical) span residues 84–104 (LDIW…TVEI) and 120–140 (LPTV…VFIF).

Belongs to the ELIP/psbS family.

It is found in the plastid. Its subcellular location is the chloroplast thylakoid membrane. In terms of biological role, may be involved in non-photochemical quenching, a process that maintains the balance between dissipation and utilization of light energy to minimize generation of oxidizing molecules, thereby protecting the plant against photo-oxidative damage. May play a photoprotective role in the thylakoid membrane in response to light stress. The polypeptide is Stress enhanced protein 1, chloroplastic (Arabidopsis thaliana (Mouse-ear cress)).